The chain runs to 614 residues: DNA mismatch repair protein MutL (614 aa).

The segment at 355–411 (PLSTGRVSEADPSNYATQSKFDEKPRESGSQGQSSSISAPSSYSRGGEYSARSQPEL) is disordered. Low complexity predominate over residues 382–401 (SGSQGQSSSISAPSSYSRGG).

This sequence belongs to the DNA mismatch repair MutL/HexB family.

Functionally, this protein is involved in the repair of mismatches in DNA. It is required for dam-dependent methyl-directed DNA mismatch repair. May act as a 'molecular matchmaker', a protein that promotes the formation of a stable complex between two or more DNA-binding proteins in an ATP-dependent manner without itself being part of a final effector complex. The protein is DNA mismatch repair protein MutL of Shewanella woodyi (strain ATCC 51908 / MS32).